A 411-amino-acid polypeptide reads, in one-letter code: Tyrosine--tRNA ligase (411 aa).

Y34 provides a ligand contact to L-tyrosine. Residues 39 to 48 (CTATSLHIGS) carry the 'HIGH' region motif. L-tyrosine is bound by residues Y171 and Q175. Residues 231–235 (KMGKT) carry the 'KMSKS' region motif. K234 lines the ATP pocket. Positions 345 to 411 (ISAYELFHEA…GKKRHILVRV (67 aa)) constitute an S4 RNA-binding domain.

This sequence belongs to the class-I aminoacyl-tRNA synthetase family. TyrS type 1 subfamily. Homodimer.

The protein resides in the cytoplasm. It carries out the reaction tRNA(Tyr) + L-tyrosine + ATP = L-tyrosyl-tRNA(Tyr) + AMP + diphosphate + H(+). Catalyzes the attachment of tyrosine to tRNA(Tyr) in a two-step reaction: tyrosine is first activated by ATP to form Tyr-AMP and then transferred to the acceptor end of tRNA(Tyr). The protein is Tyrosine--tRNA ligase of Rickettsia africae (strain ESF-5).